A 120-amino-acid polypeptide reads, in one-letter code: UPF0344 protein lin2366 (120 aa).

Transmembrane regions (helical) follow at residues 3 to 23 (GYVH…ALLI), 33 to 53 (MLQM…IMMV), 62 to 82 (ILAI…EMLL), and 92 to 112 (GMFL…GFYL).

It belongs to the UPF0344 family.

Its subcellular location is the cell membrane. This Listeria innocua serovar 6a (strain ATCC BAA-680 / CLIP 11262) protein is UPF0344 protein lin2366.